A 177-amino-acid chain; its full sequence is ATP synthase subunit delta (177 aa).

The protein belongs to the ATPase delta chain family. As to quaternary structure, F-type ATPases have 2 components, F(1) - the catalytic core - and F(0) - the membrane proton channel. F(1) has five subunits: alpha(3), beta(3), gamma(1), delta(1), epsilon(1). F(0) has three main subunits: a(1), b(2) and c(10-14). The alpha and beta chains form an alternating ring which encloses part of the gamma chain. F(1) is attached to F(0) by a central stalk formed by the gamma and epsilon chains, while a peripheral stalk is formed by the delta and b chains.

Its subcellular location is the cell inner membrane. Functionally, f(1)F(0) ATP synthase produces ATP from ADP in the presence of a proton or sodium gradient. F-type ATPases consist of two structural domains, F(1) containing the extramembraneous catalytic core and F(0) containing the membrane proton channel, linked together by a central stalk and a peripheral stalk. During catalysis, ATP synthesis in the catalytic domain of F(1) is coupled via a rotary mechanism of the central stalk subunits to proton translocation. This protein is part of the stalk that links CF(0) to CF(1). It either transmits conformational changes from CF(0) to CF(1) or is implicated in proton conduction. The protein is ATP synthase subunit delta of Aeromonas salmonicida (strain A449).